A 204-amino-acid polypeptide reads, in one-letter code: Ubiquitin-conjugating enzyme E2 T (204 aa).

The UBC core domain maps to 2 to 152; the sequence is QRASRLKKEL…AKQWTEAHAR (151 aa). Catalysis depends on Cys-86, which acts as the Glycyl thioester intermediate. Glycyl lysine isopeptide (Lys-Gly) (interchain with G-Cter in ubiquitin) cross-links involve residues Lys-91 and Lys-181. The disordered stretch occupies residues 150-204; sequence HARQKQKADEEELGTSSEVGDSEESHSTQKRKARPLGGMEKKFSPDVQRVYPGPS. Glycyl lysine isopeptide (Lys-Gly) (interchain with G-Cter in SUMO2) cross-links involve residues Lys-190 and Lys-191. Phosphoserine is present on Ser-193.

The protein belongs to the ubiquitin-conjugating enzyme family. Interacts with FANCL and BRCA1. Auto-ubiquitinated. Effects of auto-monoubiquitination at Lys-91 and Lys-181 are unclear.

The protein resides in the nucleus. It catalyses the reaction S-ubiquitinyl-[E1 ubiquitin-activating enzyme]-L-cysteine + [E2 ubiquitin-conjugating enzyme]-L-cysteine = [E1 ubiquitin-activating enzyme]-L-cysteine + S-ubiquitinyl-[E2 ubiquitin-conjugating enzyme]-L-cysteine.. It participates in protein modification; protein ubiquitination. Its function is as follows. Accepts ubiquitin from the E1 complex and catalyzes its covalent attachment to other proteins. Catalyzes monoubiquitination. Involved in mitomycin-C (MMC)-induced DNA repair: acts as a specific E2 ubiquitin-conjugating enzyme for the Fanconi anemia complex by associating with E3 ubiquitin-protein ligase FANCL and catalyzing monoubiquitination of FANCD2, a key step in the DNA damage pathway. Also mediates monoubiquitination of FANCL and FANCI. May contribute to ubiquitination and degradation of BRCA1. In vitro able to promote polyubiquitination using all 7 ubiquitin Lys residues, but may prefer 'Lys-11'-, 'Lys-27'-, 'Lys-48'- and 'Lys-63'-linked polyubiquitination. The polypeptide is Ubiquitin-conjugating enzyme E2 T (Ube2t) (Mus musculus (Mouse)).